The chain runs to 460 residues: Cysteine proteinase 7 (460 aa).

Positions 1–17 are cleaved as a signal peptide; sequence MKVLSALCVLLVSVATA. The propeptide at 18–111 is activation peptide; sequence KQQLSEVEYR…TESDKIFDAS (94 aa). 2 disulfides stabilise this stretch: Cys131–Cys176 and Cys167–Cys210. Cys134 is an active-site residue. Asn226 and Asn252 each carry an N-linked (GlcNAc...) asparagine glycan. Cys268 and Cys445 are oxidised to a cystine. The active site involves His275. The tract at residues 285–409 is disordered; the sequence is GSGSSGSHGG…GSSSGSNSNG (125 aa). The segment covering 294–359 has biased composition (low complexity); the sequence is GSQSQSAGSD…QSGSQSGNSG (66 aa). The segment covering 367-385 has biased composition (gly residues); sequence AGSGSGSGSGSGSGSGSGS. Positions 386–409 are enriched in low complexity; sequence VSGSASGSASGSASGSSSGSNSNG. Asn423 is an active-site residue.

Belongs to the peptidase C1 family. In terms of processing, glycosylated; contains GlcNAc-alpha-1-P-Ser residues. Also N-glycosylated.

It localises to the lysosome. The sequence is that of Cysteine proteinase 7 (cprG) from Dictyostelium discoideum (Social amoeba).